The sequence spans 332 residues: DNA-directed RNA polymerase subunit alpha (332 aa).

Residues 1–226 (MLIAQRPTLT…ELFGLCRELN (226 aa)) are alpha N-terminal domain (alpha-NTD). The segment at 245–332 (PEMNIPIEDL…GGTFFSPEDE (88 aa)) is alpha C-terminal domain (alpha-CTD).

It belongs to the RNA polymerase alpha chain family. Homodimer. The RNAP catalytic core consists of 2 alpha, 1 beta, 1 beta' and 1 omega subunit. When a sigma factor is associated with the core the holoenzyme is formed, which can initiate transcription.

The catalysed reaction is RNA(n) + a ribonucleoside 5'-triphosphate = RNA(n+1) + diphosphate. Its function is as follows. DNA-dependent RNA polymerase catalyzes the transcription of DNA into RNA using the four ribonucleoside triphosphates as substrates. This Bifidobacterium adolescentis (strain ATCC 15703 / DSM 20083 / NCTC 11814 / E194a) protein is DNA-directed RNA polymerase subunit alpha.